Reading from the N-terminus, the 354-residue chain is NAD-dependent epimerase/dehydratase ALT6 (354 aa).

NADP(+)-binding residues include K41 and Y174.

The protein belongs to the NAD(P)-dependent epimerase/dehydratase family. Dihydroflavonol-4-reductase subfamily.

It participates in mycotoxin biosynthesis. In terms of biological role, NAD-dependent epimerase/dehydratase; part of the gene cluster that mediates the biosynthesis of the host-selective toxins (HSTs) AAL-toxins, sphinganine-analog mycotoxins responsible for Alternaria stem canker on tomato by the tomato pathotype. The biosynthesis starts with the polyketide synthase ALT1-catalyzed C-16 carbon chain assembly from one starter acetyl-CoA unit with malonyl-CoA extender units. ALT1 also selectively transfers methyl groups at the first and the third cycle of chain elongation for AAL toxin. The C-16 polyketide chain is released from the enzyme by a nucleophilic attack of a carbanion, which is derived from R-carbon of glycin by decarboxylation, on the carbonyl carbon of polyketide acyl chain. This step is probably catalyzed by a pyridoxal 5'-phosphate-dependent aminoacyl transferase ALT4. The respective functions of the other enzymes encoded by the cluster have still to be elucidated. The sphingosine N-acyltransferase-like protein ALT7 seems not to act as a resistance/self-tolerance factor against the toxin in the toxin biosynthetic gene cluster, contrary to what is expected. The sequence is that of NAD-dependent epimerase/dehydratase ALT6 from Alternaria alternata (Alternaria rot fungus).